The primary structure comprises 338 residues: Mitochondrial genome maintenance exonuclease 1 (338 aa).

Residues 1 to 64 (MKLPLTFCRL…RSVLSRGPAQ (64 aa)) constitute a mitochondrion transit peptide. Active-site residues include D235, D248, and K250.

The protein belongs to the MGME1 family.

The protein localises to the mitochondrion. Functionally, metal-dependent single-stranded DNA (ssDNA) exonuclease involved in mitochondrial genome maintenance. Has preference for 5'-3' exonuclease activity but is also capable of endonuclease activity on linear substrates. Necessary for maintenance of proper 7S DNA levels. Probably involved in mitochondrial DNA (mtDNA) repair, possibly via the processing of displaced DNA containing Okazaki fragments during RNA-primed DNA synthesis on the lagging strand or via processing of DNA flaps during long-patch base excision repair. Specifically binds 5-hydroxymethylcytosine (5hmC)-containing DNA in stem cells. In Mus musculus (Mouse), this protein is Mitochondrial genome maintenance exonuclease 1 (Mgme1).